Here is a 259-residue protein sequence, read N- to C-terminus: Probable dihydroorotate dehydrogenase B (NAD(+)), electron transfer subunit (259 aa).

Residues 1–89 form the FAD-binding FR-type domain; that stretch reads MLPLNATIVQ…RGPFGKGFSL (89 aa). The [2Fe-2S] cluster site is built by C211, C216, C219, and C229.

The protein belongs to the PyrK family. In terms of assembly, heterotetramer of 2 PyrK and 2 PyrD type B subunits. It depends on [2Fe-2S] cluster as a cofactor. Requires FAD as cofactor.

Its pathway is pyrimidine metabolism; UMP biosynthesis via de novo pathway; orotate from (S)-dihydroorotate (NAD(+) route): step 1/1. Its function is as follows. Responsible for channeling the electrons from the oxidation of dihydroorotate from the FMN redox center in the PyrD type B subunit to the ultimate electron acceptor NAD(+). This is Probable dihydroorotate dehydrogenase B (NAD(+)), electron transfer subunit from Methanosarcina barkeri (strain Fusaro / DSM 804).